A 241-amino-acid chain; its full sequence is 3-dehydroquinate dehydratase (241 aa).

3-dehydroquinate is bound by residues Glu35–Arg37 and Arg70. Catalysis depends on His133, which acts as the Proton donor/acceptor. The Schiff-base intermediate with substrate role is filled by Lys160. Residues Arg202 and Gln225 each coordinate 3-dehydroquinate.

This sequence belongs to the type-I 3-dehydroquinase family. In terms of assembly, homodimer.

It catalyses the reaction 3-dehydroquinate = 3-dehydroshikimate + H2O. Its pathway is metabolic intermediate biosynthesis; chorismate biosynthesis; chorismate from D-erythrose 4-phosphate and phosphoenolpyruvate: step 3/7. Functionally, involved in the third step of the chorismate pathway, which leads to the biosynthesis of aromatic amino acids. Catalyzes the cis-dehydration of 3-dehydroquinate (DHQ) and introduces the first double bond of the aromatic ring to yield 3-dehydroshikimate. This is 3-dehydroquinate dehydratase from Staphylococcus haemolyticus (strain JCSC1435).